The following is a 329-amino-acid chain: DNA-directed RNA polymerase subunit alpha (329 aa).

The segment at Met1–Glu231 is alpha N-terminal domain (alpha-NTD). The segment at Phe249–Arg329 is alpha C-terminal domain (alpha-CTD).

The protein belongs to the RNA polymerase alpha chain family. In terms of assembly, homodimer. The RNAP catalytic core consists of 2 alpha, 1 beta, 1 beta' and 1 omega subunit. When a sigma factor is associated with the core the holoenzyme is formed, which can initiate transcription.

The catalysed reaction is RNA(n) + a ribonucleoside 5'-triphosphate = RNA(n+1) + diphosphate. In terms of biological role, DNA-dependent RNA polymerase catalyzes the transcription of DNA into RNA using the four ribonucleoside triphosphates as substrates. This is DNA-directed RNA polymerase subunit alpha from Polaromonas sp. (strain JS666 / ATCC BAA-500).